Here is a 285-residue protein sequence, read N- to C-terminus: HTH-type transcriptional regulator MurR (285 aa).

Residues 1-77 (MLYLTKIRNA…MALIGEYSAS (77 aa)) enclose the HTH rpiR-type domain. Residues 37–56 (SRKMAKQLGISQSSIVKFAQ) constitute a DNA-binding region (H-T-H motif). Residues 128-268 (IIEVISKAPF…FVGLVQLNDV (141 aa)) enclose the SIS domain.

Homotetramer.

Its pathway is amino-sugar metabolism; N-acetylmuramate degradation [regulation]. Represses the expression of the murPQ operon involved in the uptake and degradation of N-acetylmuramic acid (MurNAc). Binds to two adjacent inverted repeats within the operator region. MurNAc 6-phosphate, the substrate of MurQ, is the specific inducer that weakens binding of MurR to the operator. This is HTH-type transcriptional regulator MurR from Shigella sonnei (strain Ss046).